A 363-amino-acid polypeptide reads, in one-letter code: 3-dehydroquinate synthase (363 aa).

Residues 107–111, 131–132, K144, and K153 each bind NAD(+); these read GVIGD and TT. Positions 186, 251, and 268 each coordinate Zn(2+).

It belongs to the sugar phosphate cyclases superfamily. Dehydroquinate synthase family. Requires NAD(+) as cofactor. It depends on Co(2+) as a cofactor. The cofactor is Zn(2+).

It localises to the cytoplasm. It catalyses the reaction 7-phospho-2-dehydro-3-deoxy-D-arabino-heptonate = 3-dehydroquinate + phosphate. Its pathway is metabolic intermediate biosynthesis; chorismate biosynthesis; chorismate from D-erythrose 4-phosphate and phosphoenolpyruvate: step 2/7. In terms of biological role, catalyzes the conversion of 3-deoxy-D-arabino-heptulosonate 7-phosphate (DAHP) to dehydroquinate (DHQ). This chain is 3-dehydroquinate synthase, found in Nostoc sp. (strain PCC 7120 / SAG 25.82 / UTEX 2576).